A 158-amino-acid chain; its full sequence is Putative 4-hydroxy-4-methyl-2-oxoglutarate aldolase (158 aa).

Substrate is bound by residues 75 to 78 and arginine 97; that span reads GDLI. Aspartate 98 is a binding site for a divalent metal cation.

Belongs to the class II aldolase/RraA-like family. In terms of assembly, homotrimer. A divalent metal cation is required as a cofactor.

The enzyme catalyses 4-hydroxy-4-methyl-2-oxoglutarate = 2 pyruvate. It carries out the reaction oxaloacetate + H(+) = pyruvate + CO2. Its function is as follows. Catalyzes the aldol cleavage of 4-hydroxy-4-methyl-2-oxoglutarate (HMG) into 2 molecules of pyruvate. Also contains a secondary oxaloacetate (OAA) decarboxylase activity due to the common pyruvate enolate transition state formed following C-C bond cleavage in the retro-aldol and decarboxylation reactions. This Saccharopolyspora erythraea (strain ATCC 11635 / DSM 40517 / JCM 4748 / NBRC 13426 / NCIMB 8594 / NRRL 2338) protein is Putative 4-hydroxy-4-methyl-2-oxoglutarate aldolase.